The primary structure comprises 239 residues: Sugar fermentation stimulation protein homolog (239 aa).

The protein belongs to the SfsA family.

The protein is Sugar fermentation stimulation protein homolog of Methanobrevibacter smithii (strain ATCC 35061 / DSM 861 / OCM 144 / PS).